We begin with the raw amino-acid sequence, 547 residues long: Mucin-13 (547 aa).

A compositionally biased stretch (low complexity) spans 1–210 (MSQSSGGTST…TVTSSSSTGS (210 aa)). A disordered region spans residues 1–218 (MSQSSGGTST…GSNDPCNSNP (218 aa)). One can recognise an EGF-like 1 domain in the interval 210-249 (SNDPCNSNPCKSPASCVKLYDSYFCLCLEGYYYNNSSSCV). Disulfide bonds link Cys214–Cys225, Cys219–Cys234, and Cys236–Cys248. Residues Asn243, Asn244, and Asn263 are each glycosylated (N-linked (GlcNAc...) asparagine). The 117-residue stretch at 250-366 (KGTTFPGEIG…ERYFQQDRCD (117 aa)) folds into the SEA domain. EGF-like domains are found at residues 361–401 (QQDR…PFCV) and 401–441 (VAPT…GKCE). 5 disulfide bridges follow: Cys365–Cys378, Cys370–Cys384, Cys386–Cys400, Cys409–Cys427, and Cys429–Cys440. Residues 459 to 479 (ILTIVGTIAGAFILILLIVFI) traverse the membrane as a helical segment. Residues 480–547 (VSMRSKNKKK…NHRSMPRPDY (68 aa)) lie on the Cytoplasmic side of the membrane. Residues 525–547 (KTGVPSQTSNPYANHRSMPRPDY) are disordered.

In terms of assembly, homodimer of beta subunits. In terms of processing, cleaved into two subunits, alpha and beta, probably between the first EGF domain and the SEA domain. Beta subunit contains the cytoplasmic tail and alpha subunit the extracellular tail. The homooligomerization into dimers is dependent on intrachain disulfide bonds. Highly glycosylated.

It is found in the cell membrane. The protein localises to the secreted. Functionally, epithelial and hemopoietic transmembrane mucin that may play a role in cell signaling. This chain is Mucin-13 (Muc13), found in Rattus norvegicus (Rat).